The following is a 375-amino-acid chain: Carbamoyl phosphate synthase small chain (375 aa).

Residues 1–185 (MTQPAILVLE…LNANAFVQAE (185 aa)) are CPSase. Residues serine 47, glycine 237, and glycine 239 each coordinate L-glutamine. The 187-residue stretch at 189–375 (KVVAYDYGVK…FVASMAEAKS (187 aa)) folds into the Glutamine amidotransferase type-1 domain. The active-site Nucleophile is the cysteine 265. Leucine 266, glutamine 269, asparagine 307, glycine 309, and phenylalanine 310 together coordinate L-glutamine. Residues histidine 349 and glutamate 351 contribute to the active site.

The protein belongs to the CarA family. As to quaternary structure, composed of two chains; the small (or glutamine) chain promotes the hydrolysis of glutamine to ammonia, which is used by the large (or ammonia) chain to synthesize carbamoyl phosphate. Tetramer of heterodimers (alpha,beta)4.

It catalyses the reaction hydrogencarbonate + L-glutamine + 2 ATP + H2O = carbamoyl phosphate + L-glutamate + 2 ADP + phosphate + 2 H(+). The catalysed reaction is L-glutamine + H2O = L-glutamate + NH4(+). Its pathway is amino-acid biosynthesis; L-arginine biosynthesis; carbamoyl phosphate from bicarbonate: step 1/1. The protein operates within pyrimidine metabolism; UMP biosynthesis via de novo pathway; (S)-dihydroorotate from bicarbonate: step 1/3. Small subunit of the glutamine-dependent carbamoyl phosphate synthetase (CPSase). CPSase catalyzes the formation of carbamoyl phosphate from the ammonia moiety of glutamine, carbonate, and phosphate donated by ATP, constituting the first step of 2 biosynthetic pathways, one leading to arginine and/or urea and the other to pyrimidine nucleotides. The small subunit (glutamine amidotransferase) binds and cleaves glutamine to supply the large subunit with the substrate ammonia. The sequence is that of Carbamoyl phosphate synthase small chain from Xanthomonas campestris pv. campestris (strain ATCC 33913 / DSM 3586 / NCPPB 528 / LMG 568 / P 25).